The primary structure comprises 433 residues: 23S rRNA (uracil(1939)-C(5))-methyltransferase RlmD (433 aa).

The region spanning 10–68 is the TRAM domain; sequence RTTTRQIITVSVNDLDSFGQGVARHNGKTLFIPGLLPQENAEVTVTEDKKQYARAKVVR. Residues cysteine 81, cysteine 87, cysteine 90, and cysteine 162 each coordinate [4Fe-4S] cluster. S-adenosyl-L-methionine is bound by residues glutamine 265, phenylalanine 294, asparagine 299, glutamate 315, asparagine 342, and aspartate 363. The active-site Nucleophile is the cysteine 389.

This sequence belongs to the class I-like SAM-binding methyltransferase superfamily. RNA M5U methyltransferase family. RlmD subfamily.

The catalysed reaction is uridine(1939) in 23S rRNA + S-adenosyl-L-methionine = 5-methyluridine(1939) in 23S rRNA + S-adenosyl-L-homocysteine + H(+). Its function is as follows. Catalyzes the formation of 5-methyl-uridine at position 1939 (m5U1939) in 23S rRNA. The protein is 23S rRNA (uracil(1939)-C(5))-methyltransferase RlmD of Escherichia coli O6:K15:H31 (strain 536 / UPEC).